Reading from the N-terminus, the 207-residue chain is Dephospho-CoA kinase (207 aa).

A DPCK domain is found at 5-203 (AVGLTGGVAC…ARYRALASVF (199 aa)). 13–18 (ACGKSL) contributes to the ATP binding site.

It belongs to the CoaE family.

Its subcellular location is the cytoplasm. The catalysed reaction is 3'-dephospho-CoA + ATP = ADP + CoA + H(+). It participates in cofactor biosynthesis; coenzyme A biosynthesis; CoA from (R)-pantothenate: step 5/5. Its function is as follows. Catalyzes the phosphorylation of the 3'-hydroxyl group of dephosphocoenzyme A to form coenzyme A. The chain is Dephospho-CoA kinase from Xylella fastidiosa (strain Temecula1 / ATCC 700964).